The sequence spans 334 residues: Glycerol-1-phosphate dehydrogenase [NAD(P)+] (334 aa).

Residues 77-81 (GRPID) and 99-102 (TTAS) each bind NAD(+). Residue D104 participates in substrate binding. S108 is a binding site for NAD(+). D147 is a binding site for substrate. Residues D147 and H225 each contribute to the Zn(2+) site. Substrate is bound at residue H229. H246 is a binding site for Zn(2+).

The protein belongs to the glycerol-1-phosphate dehydrogenase family. It depends on Zn(2+) as a cofactor.

It is found in the cytoplasm. It catalyses the reaction sn-glycerol 1-phosphate + NAD(+) = dihydroxyacetone phosphate + NADH + H(+). It carries out the reaction sn-glycerol 1-phosphate + NADP(+) = dihydroxyacetone phosphate + NADPH + H(+). The protein operates within membrane lipid metabolism; glycerophospholipid metabolism. Its function is as follows. Catalyzes the NAD(P)H-dependent reduction of dihydroxyacetonephosphate (DHAP or glycerone phosphate) to glycerol 1-phosphate (G1P). The G1P thus generated is used as the glycerophosphate backbone of phospholipids in the cellular membranes of Archaea. This chain is Glycerol-1-phosphate dehydrogenase [NAD(P)+], found in Methanococcus maripaludis (strain C6 / ATCC BAA-1332).